We begin with the raw amino-acid sequence, 145 residues long: Large ribosomal subunit protein uL13 (145 aa).

It belongs to the universal ribosomal protein uL13 family. In terms of assembly, part of the 50S ribosomal subunit.

This protein is one of the early assembly proteins of the 50S ribosomal subunit, although it is not seen to bind rRNA by itself. It is important during the early stages of 50S assembly. This is Large ribosomal subunit protein uL13 from Bacillus licheniformis (strain ATCC 14580 / DSM 13 / JCM 2505 / CCUG 7422 / NBRC 12200 / NCIMB 9375 / NCTC 10341 / NRRL NRS-1264 / Gibson 46).